The chain runs to 848 residues: ATP-dependent Clp protease ATP-binding subunit ClpC1 (848 aa).

A Clp R domain is found at 2–144; sequence FERFTDRARR…RQQVIQLLSG (143 aa). 2 repeat regions span residues 5–70 and 80–144; these read FTDR…IGQG and FTPR…LLSG. The UVR domain maps to 425–460; it reads DEKIADARREKESAIDAQDFEKAAALRDKEKQLVAQ. ATP-binding positions include 553–560 and 617–626; these read GPSGVGKT and KPFSVVLFDE. The disordered stretch occupies residues 811–848; it reads GQGEDAKFTFSGGPKRAETAEPDLAGAGAAGAPTAGTE. Positions 835 to 848 are enriched in low complexity; the sequence is AGAGAAGAPTAGTE.

This sequence belongs to the ClpA/ClpB family. ClpC subfamily.

In terms of biological role, ATP-dependent specificity component of the Clp protease. It directs the protease to specific substrates. Can perform chaperone functions in the absence of ClpP. Degrades anti-sigma-E factor RseA in the presence of ClpP2. The chain is ATP-dependent Clp protease ATP-binding subunit ClpC1 (clpC1) from Mycolicibacterium smegmatis (strain ATCC 700084 / mc(2)155) (Mycobacterium smegmatis).